We begin with the raw amino-acid sequence, 658 residues long: Sulfate transporter 3.1 (658 aa).

Over 1–85 (MGTEDYTFPQ…RYNLKFFKSD (85 aa)) the chain is Cytoplasmic. A helical transmembrane segment spans residues 86–106 (LIAGITIASLAIPQGISYAKL). Topologically, residues 107–108 (AN) are extracellular. The chain crosses the membrane as a helical span at residues 109 to 129 (LPPILGLYSSFVPPLVYAVLG). Residues 130-133 (SSRD) are Cytoplasmic-facing. A helical membrane pass occupies residues 134-154 (LAVGTVAVASLLTGAMLSKEV). At 155-163 (DAEKDPKLY) the chain is on the extracellular side. A helical membrane pass occupies residues 164–184 (LHLAFTATFFAGVLEASLGIF). Position 185 (R185) is a topological domain, cytoplasmic. A helical membrane pass occupies residues 186 to 206 (LGFIVDFLSHATIVGFMGGAA). Residues 207-245 (TVVSLQQLKGIFGLKHFTDSTDVISVMRSVFSQTHEWRW) are Extracellular-facing. The chain crosses the membrane as a helical span at residues 246-266 (ESGVLGCGFLFFLLSTRYFSI). Over 267–271 (KKPKF) the chain is Cytoplasmic. Residues 272–292 (FWVAAMAPLTSVILGSLLVYF) traverse the membrane as a helical segment. Topologically, residues 293–332 (THAERHGVQVIGDLKKGLNPLSGSDLIFTSPYMSTAVKTG) are extracellular. A helical membrane pass occupies residues 333-353 (LITGIIALAEGVAVGRSFAMF). Topologically, residues 354 to 363 (KNYNIDGNKE) are cytoplasmic. A helical membrane pass occupies residues 364-384 (MIAFGMMNIVGSFTSCYLTTG). Topologically, residues 385–398 (PFSRSAVNYNAGCK) are extracellular. Residues 399-419 (TAMSNIVMAIAVMFTLLFLTP) traverse the membrane as a helical segment. At 420 to 425 (LFHYTP) the chain is on the cytoplasmic side. The chain crosses the membrane as a helical span at residues 426–446 (LVVLSAIIISAMLGLIDYQAA). Residues 447–464 (IHLWKVDKFDFLVCMSAY) are Extracellular-facing. The chain crosses the membrane as a helical span at residues 465 to 485 (VGVVFGSVEIGLVVAVAISIA). Residues 486–658 (RLLLFVSRPK…ASKNEPWNNV (173 aa)) lie on the Cytoplasmic side of the membrane. The region spanning 513–637 (QYPSSRTVPG…LTVGEAVEAC (125 aa)) is the STAS domain.

It belongs to the SLC26A/SulP transporter (TC 2.A.53) family. Expressed only in leaves.

The protein resides in the membrane. In terms of biological role, h(+)/sulfate cotransporter that may play a role in the regulation of sulfate assimilation. In Arabidopsis thaliana (Mouse-ear cress), this protein is Sulfate transporter 3.1 (SULTR3;1).